Here is a 185-residue protein sequence, read N- to C-terminus: Ribosome-recycling factor (185 aa).

This sequence belongs to the RRF family.

The protein localises to the cytoplasm. Its function is as follows. Responsible for the release of ribosomes from messenger RNA at the termination of protein biosynthesis. May increase the efficiency of translation by recycling ribosomes from one round of translation to another. The protein is Ribosome-recycling factor of Vibrio vulnificus (strain YJ016).